A 189-amino-acid chain; its full sequence is Pyridoxal 5'-phosphate synthase subunit PdxT (189 aa).

46 to 48 (GES) serves as a coordination point for L-glutamine. The active-site Nucleophile is the cysteine 78. L-glutamine-binding positions include arginine 107 and 136 to 137 (IR). Catalysis depends on charge relay system residues histidine 173 and glutamate 175.

Belongs to the glutaminase PdxT/SNO family. In the presence of PdxS, forms a dodecamer of heterodimers. Only shows activity in the heterodimer.

It carries out the reaction aldehydo-D-ribose 5-phosphate + D-glyceraldehyde 3-phosphate + L-glutamine = pyridoxal 5'-phosphate + L-glutamate + phosphate + 3 H2O + H(+). The enzyme catalyses L-glutamine + H2O = L-glutamate + NH4(+). It participates in cofactor biosynthesis; pyridoxal 5'-phosphate biosynthesis. Its function is as follows. Catalyzes the hydrolysis of glutamine to glutamate and ammonia as part of the biosynthesis of pyridoxal 5'-phosphate. The resulting ammonia molecule is channeled to the active site of PdxS. In Roseiflexus castenholzii (strain DSM 13941 / HLO8), this protein is Pyridoxal 5'-phosphate synthase subunit PdxT.